A 288-amino-acid polypeptide reads, in one-letter code: Bifunctional protein FolD (288 aa).

NADP(+) contacts are provided by residues 166-168 (GAS) and Ile232.

It belongs to the tetrahydrofolate dehydrogenase/cyclohydrolase family. Homodimer.

The enzyme catalyses (6R)-5,10-methylene-5,6,7,8-tetrahydrofolate + NADP(+) = (6R)-5,10-methenyltetrahydrofolate + NADPH. It carries out the reaction (6R)-5,10-methenyltetrahydrofolate + H2O = (6R)-10-formyltetrahydrofolate + H(+). It participates in one-carbon metabolism; tetrahydrofolate interconversion. Catalyzes the oxidation of 5,10-methylenetetrahydrofolate to 5,10-methenyltetrahydrofolate and then the hydrolysis of 5,10-methenyltetrahydrofolate to 10-formyltetrahydrofolate. The sequence is that of Bifunctional protein FolD from Escherichia fergusonii (strain ATCC 35469 / DSM 13698 / CCUG 18766 / IAM 14443 / JCM 21226 / LMG 7866 / NBRC 102419 / NCTC 12128 / CDC 0568-73).